The primary structure comprises 458 residues: Tissue-resident T-cell transcription regulator protein ZNF683 (458 aa).

Disordered stretches follow at residues 84–109 and 249–275; these read PQDL…TDSE and TLHS…APTR. 3 consecutive C2H2-type zinc fingers follow at residues 301–323, 329–351, and 357–379; these read YECN…LRVH, FQCA…HLVH, and HQCQ…LRLH.

This sequence belongs to the krueppel C2H2-type zinc-finger protein family. Expressed in tissue-resident memory T (Trm) cell population in non-lymphoid organs, such as skin and gut. Expressed in innate lymphocytes, including tissue-resident natural killer (trNK) and natural killer T (NKT) cells in thymus, spleen and liver.

It localises to the nucleus. Functionally, transcription factor that mediates a transcriptional program in various innate and adaptive immune tissue-resident lymphocyte T-cell types such as tissue-resident memory T (Trm), natural killer (trNK) and natural killer T (NKT) cells and negatively regulates gene expression of proteins that promote the egress of tissue-resident T-cell populations from non-lymphoid organs. Plays a role in the development, retention and long-term establishment of adaptive and innate tissue-resident lymphocyte T-cell types in non-lymphoid organs, such as the skin and gut, but also in other nonbarrier tissues like liver and kidney, and therefore may provide immediate immunological protection against reactivating infections or viral reinfection. Also plays a role in the differentiation of both thymic and peripheral NKT cells. Negatively regulates the accumulation of interferon-gamma (IFN-gamma) in NKT cells at steady state or after antigenic stimulation. Positively regulates granzyme B production in NKT cells after innate stimulation. Associates with the transcriptional repressor PRDM1/BLIMP1 to chromatin at gene promoter regions. The chain is Tissue-resident T-cell transcription regulator protein ZNF683 from Mus musculus (Mouse).